We begin with the raw amino-acid sequence, 2203 residues long: Genome polyprotein (2203 aa).

Residue Gly-2 is the site of N-myristoyl glycine; by host attachment. Topologically, residues 2 to 1513 (GAQVSTQKTG…HVSRAFICLQ (1512 aa)) are cytoplasmic. Positions 567–583 (ELQNDVRQAVEGAIGRV) are amphipathic alpha-helix. Active-site for protease 2A activity residues include His-890 and Asp-908. Zn(2+) is bound by residues Cys-925 and Cys-927. Cys-979 acts as the For protease 2A activity in catalysis. Positions 985 and 987 each coordinate Zn(2+). A membrane-binding region spans residues 1119–1191 (SNGWLKKFTE…EQSAPSQSDQ (73 aa)). An oligomerization region spans residues 1119–1257 (SNGWLKKFTE…SPGAGKSVAT (139 aa)). Residues 1140 to 1144 (AVKIQ) form an RNA-binding region. The SF3 helicase domain occupies 1223-1379 (EKKMSNYIQF…SMYSQNGKIN (157 aa)). Cys-1387, Cys-1399, and Cys-1404 together coordinate Zn(2+). The segment at 1387–1404 (CDEECCPVNFKRCCPLVC) adopts a C4-type; degenerate zinc-finger fold. Residues 1431–1438 (EYNHRHSV) form an RNA-binding region. The oligomerization stretch occupies residues 1442–1447 (LEALFQ). The stretch at 1514 to 1529 (ALTTFVSVAGIIYIIY) is an intramembrane region. Over 1530–2203 (KLFAGFQGAY…TLRRKWLDSF (674 aa)) the chain is Cytoplasmic. At Tyr-1539 the chain carries O-(5'-phospho-RNA)-tyrosine. Residues 1559-1737 (GPAFEFAVAM…FSAALLRHYF (179 aa)) form the Peptidase C3 domain. Catalysis depends on for protease 3C activity residues His-1598, Glu-1629, and Cys-1705. One can recognise a RdRp catalytic domain in the interval 1968–2084 (GHLIAFDYSG…SYPWPIDASL (117 aa)). Positions 1974 and 2070 each coordinate Mg(2+).

This sequence belongs to the picornaviruses polyprotein family. In terms of assembly, interacts with capsid protein VP1 and capsid protein VP3 to form heterotrimeric protomers. As to quaternary structure, interacts with capsid protein VP0, and capsid protein VP3 to form heterotrimeric protomers. Five protomers subsequently associate to form pentamers which serve as building blocks for the capsid. Interacts with capsid protein VP2, capsid protein VP3 and capsid protein VP4 following cleavage of capsid protein VP0. Interacts with capsid protein VP1 and capsid protein VP3 in the mature capsid. In terms of assembly, interacts with capsid protein VP0 and capsid protein VP1 to form heterotrimeric protomers. Five protomers subsequently associate to form pentamers which serve as building blocks for the capsid. Interacts with capsid protein VP4 in the mature capsid. Interacts with protein 2C; this interaction may be important for virion morphogenesis. As to quaternary structure, interacts with capsid protein VP1 and capsid protein VP3. Homodimer. In terms of assembly, homohexamer; forms a hexameric ring structure with 6-fold symmetry characteristic of AAA+ ATPases. Interacts (via N-terminus) with host RTN3 (via reticulon domain); this interaction is important for viral replication. Interacts with capsid protein VP3; this interaction may be important for virion morphogenesis. As to quaternary structure, interacts with protein 3CD. Homodimer. Interacts with host GBF1. Interacts (via GOLD domain) with host ACBD3 (via GOLD domain); this interaction allows the formation of a viral protein 3A/ACBD3 heterotetramer with a 2:2 stoichiometry, which will stimulate the recruitment of host PI4KB in order to synthesize PI4P at the viral RNA replication sites. In terms of assembly, interacts with RNA-directed RNA polymerase. As to quaternary structure, interacts with protein 3AB and with RNA-directed RNA polymerase. Interacts with Viral protein genome-linked and with protein 3CD. Mg(2+) is required as a cofactor. Specific enzymatic cleavages in vivo by the viral proteases yield processing intermediates and the mature proteins. In terms of processing, myristoylation is required for the formation of pentamers during virus assembly. Further assembly of 12 pentamers and a molecule of genomic RNA generates the provirion. Post-translationally, during virion maturation, immature virions are rendered infectious following cleavage of VP0 into VP4 and VP2. This maturation seems to be an autocatalytic event triggered by the presence of RNA in the capsid and it is followed by a conformational change infectious virion. Myristoylation is required during RNA encapsidation and formation of the mature virus particle. In terms of processing, VPg is uridylylated by the polymerase into VPg-pUpU. This acts as a nucleotide-peptide primer for the genomic RNA replication.

It localises to the virion. The protein resides in the host cytoplasm. The protein localises to the host cytoplasmic vesicle membrane. Its subcellular location is the host nucleus. The enzyme catalyses a ribonucleoside 5'-triphosphate + H2O = a ribonucleoside 5'-diphosphate + phosphate + H(+). It carries out the reaction Selective cleavage of Tyr-|-Gly bond in the picornavirus polyprotein.. It catalyses the reaction RNA(n) + a ribonucleoside 5'-triphosphate = RNA(n+1) + diphosphate. The catalysed reaction is Selective cleavage of Gln-|-Gly bond in the poliovirus polyprotein. In other picornavirus reactions Glu may be substituted for Gln, and Ser or Thr for Gly.. Its activity is regulated as follows. Replication or transcription is subject to high level of random mutations by the nucleotide analog ribavirin. In terms of biological role, forms an icosahedral capsid of pseudo T=3 symmetry with capsid proteins VP2 and VP3. The capsid is 300 Angstroms in diameter, composed of 60 copies of each capsid protein and enclosing the viral positive strand RNA genome. Capsid protein VP1 mainly forms the vertices of the capsid. Capsid protein VP1 interacts with host cell receptor to provide virion attachment to target host cells. This attachment induces virion internalization. Tyrosine kinases are probably involved in the entry process. After binding to its receptor, the capsid undergoes conformational changes. Capsid protein VP1 N-terminus (that contains an amphipathic alpha-helix) and capsid protein VP4 are externalized. Together, they shape a pore in the host membrane through which viral genome is translocated to host cell cytoplasm. Forms an icosahedral capsid of pseudo T=3 symmetry with capsid proteins VP2 and VP3. The capsid is 300 Angstroms in diameter, composed of 60 copies of each capsid protein and enclosing the viral positive strand RNA genome. Its function is as follows. Lies on the inner surface of the capsid shell. After binding to the host receptor, the capsid undergoes conformational changes. Capsid protein VP4 is released, Capsid protein VP1 N-terminus is externalized, and together, they shape a pore in the host membrane through which the viral genome is translocated into the host cell cytoplasm. Functionally, component of immature procapsids, which is cleaved into capsid proteins VP4 and VP2 after maturation. Allows the capsid to remain inactive before the maturation step. In terms of biological role, cysteine protease that cleaves viral polyprotein and specific host proteins. It is responsible for the autocatalytic cleavage between the P1 and P2 regions, which is the first cleavage occurring in the polyprotein. Also cleaves the host translation initiation factor EIF4G1, in order to shut down the capped cellular mRNA translation. Inhibits the host nucleus-cytoplasm protein and RNA trafficking by cleaving host members of the nuclear pores. Counteracts stress granule formation probably by antagonizing its assembly or promoting its dissassembly. Plays an essential role in the virus replication cycle by acting as a viroporin. Creates a pore in the host endoplasmic reticulum and as a consequence releases Ca2+ in the cytoplasm of infected cell. In turn, high levels of cytoplasmic calcium may trigger membrane trafficking and transport of viral ER-associated proteins to viroplasms, sites of viral genome replication. Its function is as follows. Induces and associates with structural rearrangements of intracellular membranes. Displays RNA-binding, nucleotide binding and NTPase activities. May play a role in virion morphogenesis and viral RNA encapsidation by interacting with the capsid protein VP3. Functionally, localizes the viral replication complex to the surface of membranous vesicles. Together with protein 3CD binds the Cis-Active RNA Element (CRE) which is involved in RNA synthesis initiation. Acts as a cofactor to stimulate the activity of 3D polymerase, maybe through a nucleid acid chaperone activity. In terms of biological role, localizes the viral replication complex to the surface of membranous vesicles. It inhibits host cell endoplasmic reticulum-to-Golgi apparatus transport and causes the disassembly of the Golgi complex, possibly through GBF1 interaction. This would result in depletion of MHC, trail receptors and IFN receptors at the host cell surface. Plays an essential role in viral RNA replication by recruiting ACBD3 and PI4KB at the viral replication sites, thereby allowing the formation of the rearranged membranous structures where viral replication takes place. Acts as a primer for viral RNA replication and remains covalently bound to viral genomic RNA. VPg is uridylylated prior to priming replication into VPg-pUpU. The oriI viral genomic sequence may act as a template for this. The VPg-pUpU is then used as primer on the genomic RNA poly(A) by the RNA-dependent RNA polymerase to replicate the viral genome. During genome replication, the VPg-RNA linkage is removed by the host TDP2, thereby accelerating replication. During the late stage of the replication cycle, host TDP2 is excluded from sites of viral RNA synthesis and encapsidation, allowing for the generation of progeny virions. Its function is as follows. Involved in the viral replication complex and viral polypeptide maturation. It exhibits protease activity with a specificity and catalytic efficiency that is different from protease 3C. Protein 3CD lacks polymerase activity. Protein 3CD binds to the 5'UTR of the viral genome. Functionally, replicates the viral genomic RNA on the surface of intracellular membranes. May form linear arrays of subunits that propagate along a strong head-to-tail interaction called interface-I. Covalently attaches UMP to a tyrosine of VPg, which is used to prime RNA synthesis. The positive stranded RNA genome is first replicated at virus induced membranous vesicles, creating a dsRNA genomic replication form. This dsRNA is then used as template to synthesize positive stranded RNA genomes. ss(+)RNA genomes are either translated, replicated or encapsidated. In terms of biological role, major viral protease that mediates proteolytic processing of the polyprotein. Cleaves host EIF5B, contributing to host translation shutoff. Also cleaves host PABPC1, contributing to host translation shutoff. Cleaves host NLRP1, triggers host N-glycine-mediated degradation of the autoinhibitory NLRP1 N-terminal fragment. The polypeptide is Genome polyprotein (Echovirus 9 (strain Barty)).